The sequence spans 475 residues: ESX-3 secretion system protein EccD3 (475 aa).

The next 11 membrane-spanning stretches (helical) occupy residues 132–152 (IARG…GLSV), 161–181 (LLGQ…ALAV), 186–206 (AVLA…AFAL), 212–232 (FGAP…LISM), 241–261 (IAVF…AGAA), 264–284 (WVIS…IVTV), 333–353 (GVIA…VSSA), 354–374 (NASP…ALRA), 384–404 (AWLL…FVIG), 409–429 (AALW…VAAL), and 453–473 (GLDA…SLVL).

This sequence belongs to the EccD/Snm4 family. As to quaternary structure, part of the ESX-3 / type VII secretion system (T7SS), which is composed of cytosolic and membrane components. The ESX-3 membrane complex is composed of EccB3, EccC3, EccD3 and EccE3.

Its subcellular location is the cell inner membrane. Functionally, part of the ESX-3 specialized secretion system, which is required for siderophore-mediated iron acquisition and for the secretion of EsxH and EsxG. The protein is ESX-3 secretion system protein EccD3 of Mycolicibacterium smegmatis (strain ATCC 700084 / mc(2)155) (Mycobacterium smegmatis).